The following is a 126-amino-acid chain: Holo-[acyl-carrier-protein] synthase (126 aa).

Positions 9 and 57 each coordinate Mg(2+).

The protein belongs to the P-Pant transferase superfamily. AcpS family. The cofactor is Mg(2+).

It localises to the cytoplasm. It catalyses the reaction apo-[ACP] + CoA = holo-[ACP] + adenosine 3',5'-bisphosphate + H(+). Its function is as follows. Transfers the 4'-phosphopantetheine moiety from coenzyme A to a Ser of acyl-carrier-protein. The polypeptide is Holo-[acyl-carrier-protein] synthase (Idiomarina loihiensis (strain ATCC BAA-735 / DSM 15497 / L2-TR)).